Reading from the N-terminus, the 104-residue chain is Protein MGF 300-3L (104 aa).

It belongs to the asfivirus MGF 300 family.

Functionally, plays a role in virus cell tropism, and may be required for efficient virus replication in macrophages. This is Protein MGF 300-3L from African swine fever virus (isolate Tick/Malawi/Lil 20-1/1983) (ASFV).